The primary structure comprises 181 residues: Large ribosomal subunit protein bL17 (181 aa).

Over residues 141 to 159 the composition is skewed to low complexity; sequence KAASATAESAPVATANDAA. A disordered region spans residues 141–181; it reads KAASATAESAPVATANDAAPAEEAEVQGVKDPAEDCEAKAD. Residues 171–181 are compositionally biased toward basic and acidic residues; the sequence is DPAEDCEAKAD.

It belongs to the bacterial ribosomal protein bL17 family. As to quaternary structure, part of the 50S ribosomal subunit. Contacts protein L32.

This chain is Large ribosomal subunit protein bL17, found in Geotalea daltonii (strain DSM 22248 / JCM 15807 / FRC-32) (Geobacter daltonii).